The sequence spans 259 residues: Electron transfer flavoprotein subunit beta (259 aa).

It belongs to the ETF beta-subunit/FixA family. As to quaternary structure, heterodimer of an alpha and a beta subunit. Requires FAD as cofactor. AMP serves as cofactor.

In terms of biological role, the electron transfer flavoprotein serves as a specific electron acceptor for other dehydrogenases. It transfers the electrons to the main respiratory chain via ETF-ubiquinone oxidoreductase (ETF dehydrogenase). The protein is Electron transfer flavoprotein subunit beta (etfB) of Clostridium acetobutylicum (strain ATCC 824 / DSM 792 / JCM 1419 / IAM 19013 / LMG 5710 / NBRC 13948 / NRRL B-527 / VKM B-1787 / 2291 / W).